A 147-amino-acid polypeptide reads, in one-letter code: Ubiquitin-conjugating enzyme E2 D2 (147 aa).

Residues Met1–Met147 form the UBC core domain. Cys85 (glycyl thioester intermediate) is an active-site residue.

This sequence belongs to the ubiquitin-conjugating enzyme family. Interacts with SCF (SKP1-CUL1-F-box protein) E3 ubiquitin ligase complex. Interacts with CNOT4 (via RING domain). Interacts with E3 ubiquitin-protein ligases CBLC, PJA1 and PJA2. Interacts with PDZRN3. Interacts with PPP1R11. Interacts with E3 ubiquitin-protein ligase PHF7; the interaction inhibits cleavage of PHF7 and promotes association of the complex with the nucleosome core particle.

The catalysed reaction is S-ubiquitinyl-[E1 ubiquitin-activating enzyme]-L-cysteine + [E2 ubiquitin-conjugating enzyme]-L-cysteine = [E1 ubiquitin-activating enzyme]-L-cysteine + S-ubiquitinyl-[E2 ubiquitin-conjugating enzyme]-L-cysteine.. It carries out the reaction S-ubiquitinyl-[E1 ubiquitin-activating enzyme]-L-cysteine + [acceptor protein]-L-lysine = [E1 ubiquitin-activating enzyme]-L-cysteine + N(6)-monoubiquitinyl-[acceptor protein]-L-lysine.. It participates in protein modification; protein ubiquitination. Its function is as follows. Accepts ubiquitin from the E1 complex and catalyzes its covalent attachment to other proteins. In vitro catalyzes 'Lys-48'-linked polyubiquitination. Mediates the selective degradation of short-lived and abnormal proteins. Functions in the E6/E6-AP-induced ubiquitination of p53/TP53. Mediates ubiquitination of PEX5 and SQSTM1 and autoubiquitination of STUB1 and TRAF6. Involved in the signal-induced conjugation and subsequent degradation of NFKBIA, FBXW2-mediated GCM1 ubiquitination and degradation, MDM2-dependent degradation of p53/TP53 and the activation of MAVS in the mitochondria by RIGI in response to viral infection. Essential for viral activation of IRF3. The sequence is that of Ubiquitin-conjugating enzyme E2 D2 (UBE2D2) from Sus scrofa (Pig).